The sequence spans 957 residues: Glycine dehydrogenase (decarboxylating) 2 (957 aa).

At Lys707 the chain carries N6-(pyridoxal phosphate)lysine.

This sequence belongs to the GcvP family. The glycine cleavage system is composed of four proteins: P, T, L and H. Pyridoxal 5'-phosphate serves as cofactor.

It catalyses the reaction N(6)-[(R)-lipoyl]-L-lysyl-[glycine-cleavage complex H protein] + glycine + H(+) = N(6)-[(R)-S(8)-aminomethyldihydrolipoyl]-L-lysyl-[glycine-cleavage complex H protein] + CO2. The glycine cleavage system catalyzes the degradation of glycine. The P protein binds the alpha-amino group of glycine through its pyridoxal phosphate cofactor; CO(2) is released and the remaining methylamine moiety is then transferred to the lipoamide cofactor of the H protein. This is Glycine dehydrogenase (decarboxylating) 2 from Pseudomonas fluorescens (strain ATCC BAA-477 / NRRL B-23932 / Pf-5).